A 491-amino-acid polypeptide reads, in one-letter code: PE-PGRS family protein PE_PGRS26 (491 aa).

Positions 1–93 (MSNVMVVPGM…VGSYAAAEAA (93 aa)) constitute a PE domain. Composition is skewed to gly residues over residues 207–221 (NGGTGASGADGGGGL) and 229–238 (GGNGGGGDAG). 3 disordered regions span residues 207-238 (NGGTGASGADGGGGLPPVPASPGGNGGGGDAG), 255-275 (DGGAGGAGDSPNSGANGARGG), and 444-491 (AGGN…GKHG). Positions 444 to 485 (AGGNGGDGGPSQGGGNPGFGGDGGTGGPGGVGVPDGIGGANG) are enriched in gly residues.

It belongs to the mycobacterial PE family. PGRS subfamily.

It is found in the cell surface. This chain is PE-PGRS family protein PE_PGRS26, found in Mycobacterium tuberculosis (strain ATCC 25618 / H37Rv).